The primary structure comprises 367 residues: Teichoic acid glycerol-phosphate primase (367 aa).

Belongs to the CDP-glycerol glycerophosphotransferase family.

Its subcellular location is the cell membrane. It catalyses the reaction N-acetyl-beta-D-mannosaminyl-(1-&gt;4)-N-acetyl-alpha-D-glucosaminyl di-trans,octa-cis-undecaprenyl diphosphate + CDP-glycerol = 4-O-[(2R)-glycerylphospho]-N-acetyl-beta-D-mannosaminyl-(1-&gt;4)-N-acetyl-alpha-D-glucosaminyl di-trans,octa-cis-undecaprenyl diphosphate + CMP + H(+). It participates in cell wall biogenesis; poly(ribitol phosphate) teichoic acid biosynthesis. In terms of biological role, catalyzes the addition of a single glycerol phosphate residue to the prenoldiphosphate-linked disaccharide. The sequence is that of Teichoic acid glycerol-phosphate primase (tarB) from Staphylococcus aureus (strain NCTC 8325 / PS 47).